A 557-amino-acid polypeptide reads, in one-letter code: Copine-6 (557 aa).

2 consecutive C2 domains span residues 2–127 and 134–263; these read SDPE…TKPL and TAGK…MQWD. Ca(2+)-binding residues include Asp-167, Asp-173, Asp-229, Asp-231, and Asp-237. A linker region region spans residues 244-303; the sequence is STFQEMQEGTANPGQEMQWDCINPKYRDKKKNYKSSGTVVLAQCTVEKVHTFLDYIMGGC. In terms of domain architecture, VWFA spans 306-526; the sequence is SFTVAIDFTA…ALAKCVLAEV (221 aa).

It belongs to the copine family. In terms of assembly, interacts (via second C2 domain) with OS9 (via C-terminus); this interaction occurs in a calcium-dependent manner in vitro. May interact with NECAB1. It depends on Ca(2+) as a cofactor. Widely expressed in the brain. Expressed weakly in the kidney, liver and fetal heart. Expressed in melanocytes.

Its subcellular location is the cytoplasm. The protein localises to the cell membrane. It is found in the endosome. The protein resides in the cytoplasmic vesicle. It localises to the clathrin-coated vesicle. Its subcellular location is the perikaryon. The protein localises to the cell projection. It is found in the dendrite. Calcium-dependent phospholipid-binding protein that plays a role in calcium-mediated intracellular processes. Binds phospholipid membranes in a calcium-dependent manner. Plays a role in dendrite formation by melanocytes. This Homo sapiens (Human) protein is Copine-6.